The following is a 1977-amino-acid chain: Voltage-dependent L-type calcium channel subunit alpha-1F (1977 aa).

Basic and acidic residues predominate over residues 1-11 (MSESEGGKDTT). The disordered stretch occupies residues 1–60 (MSESEGGKDTTPEPSPANGAGPGPEWGLCPGPPAVEGESSGASGLGTPKRRNQHSKHKTV). At 1–92 (MSESEGGKDT…RSCISIVEWK (92 aa)) the chain is on the cytoplasmic side. The span at 48-59 (PKRRNQHSKHKT) shows a compositional bias: basic residues. Residues 79–375 (NPLRRSCISI…LVLGVLSGEF (297 aa)) form an I repeat. A helical membrane pass occupies residues 93–111 (PFDILILLTIFANCVALGV). The Extracellular portion of the chain corresponds to 112–129 (YIPFPEDDSNTANHNLEQ). The helical transmembrane segment at 130 to 149 (VEYVFLVIFTVETVLKIVAY) threads the bilayer. The Cytoplasmic segment spans residues 150 to 161 (GLVLHPSAYIRN). A helical membrane pass occupies residues 162–180 (GWNLLDFIIVVVGLFSVLL). The Extracellular portion of the chain corresponds to 181 to 201 (EQGPGRPGDAPHTGGKPGGFD). A helical transmembrane segment spans residues 202 to 220 (VKALRAFRVLRPLRLVSGV). Topologically, residues 221–239 (PSLHIVLNSIMKALVPLLH) are cytoplasmic. A helical membrane pass occupies residues 240-259 (IALLVLFVIIIYAIIGLELF). Topologically, residues 260-347 (LGRMHKTCYF…WMQDAMGYEL (88 aa)) are extracellular. The N-linked (GlcNAc...) asparagine glycan is linked to Asn295. Residue Glu330 coordinates Ca(2+). A helical transmembrane segment spans residues 348–372 (PWVYFVSLVIFGSFFVLNLVLGVLS). The Cytoplasmic segment spans residues 373–529 (GEFSKEREKA…ARCRRAVKSN (157 aa)). Residues 395–412 (QQMEEDLRGYLDWITQAE) form a binding to the beta subunit region. Disordered regions lie at residues 418–441 (DPSA…PQLA) and 455–488 (SHST…EDEE). A compositionally biased stretch (low complexity) spans 455 to 469 (SHSTRSTHSTSSHAS). An II repeat occupies 515–761 (NRVLRARCRR…VFLAIAVDNL (247 aa)). A helical transmembrane segment spans residues 530-549 (ACYWAVLLLVFLNTLTIASE). The Extracellular portion of the chain corresponds to 550–564 (HHGQPVWLTQIQEYA). The helical transmembrane segment at 565 to 583 (NKVLLCLFTVEMLLKLYGL) threads the bilayer. Residues 584-591 (GPSAYVSS) lie on the Cytoplasmic side of the membrane. Residues 592-610 (FFNRFDCFVVCGGILETTL) traverse the membrane as a helical segment. At 611-620 (VEVGAMQPLG) the chain is on the extracellular side. The chain crosses the membrane as a helical span at residues 621-639 (ISVLRCVRLLRIFKVTRHW). The Cytoplasmic portion of the chain corresponds to 640-658 (ASLSNLVASLLNSMKSIAS). Residues 659-679 (LLLLLFLFIIIFSLLGMQLFG) form a helical membrane-spanning segment. Residues 680 to 733 (GKFNFDQTHTKRSTFDTFPQALLTVFQILTGEDWNVVMYDGIMAYGGPFFPGML) lie on the Extracellular side of the membrane. Ca(2+) is bound at residue Glu711. Residues 734-758 (VCIYFIILFICGNYILLNVFLAIAV) form a helical membrane-spanning segment. At 759–871 (DNLASGDAGT…KGCHTLIHHH (113 aa)) the chain is on the cytoplasmic side. The segment at 767 to 830 (GTAKDKGGEK…EEEEEGAGGV (64 aa)) is disordered. The segment covering 768–783 (TAKDKGGEKSNEKDLP) has biased composition (basic and acidic residues). A compositionally biased stretch (acidic residues) spans 807–826 (DMEEEEEEEEEEEEEEEEEG). The III repeat unit spans residues 858-1140 (NPLRKGCHTL…IFVGFVIITF (283 aa)). Residues 872–890 (VFTNLILVFIILSSVSLAA) form a helical membrane-spanning segment. Topologically, residues 891–906 (EDPIRAHSFRNHILGY) are extracellular. Residues 907 to 926 (FDYAFTSIFTVEILLKMTVF) form a helical membrane-spanning segment. The Cytoplasmic segment spans residues 927-938 (GAFLHRGSFCRS). The helical transmembrane segment at 939 to 957 (WFNMLDLLVVSVSLISFGI) threads the bilayer. Over 958–963 (HSSAIS) the chain is Extracellular. Residues 964–983 (VVKILRVLRVLRPLRAINRA) traverse the membrane as a helical segment. Topologically, residues 984–1002 (KGLKHVVQCVFVAIRTIGN) are cytoplasmic. A helical membrane pass occupies residues 1003–1022 (IMIVTTLLQFMFACIGVQLF). Topologically, residues 1023–1112 (KGKFYTCTDE…HGPIYNYRVE (90 aa)) are extracellular. The dihydropyridine binding stretch occupies residues 1060-1150 (RLWVNSDFNF…RAQGEQEYQN (91 aa)). Glu1086 is a binding site for Ca(2+). A helical transmembrane segment spans residues 1113–1133 (ISVFFIVYIIIIAFFMMNIFV). The Cytoplasmic segment spans residues 1134–1190 (GFVIITFRAQGEQEYQNCELDKNQRQCVEYALKAQPLRRYIPKNPHQYRVWATVNSA). Residues 1177–1444 (NPHQYRVWAT…LFVAVIMDNF (268 aa)) form an IV repeat. A helical transmembrane segment spans residues 1191 to 1209 (AFEYLMFLLILLNTVALAM). At 1210-1224 (QHYEQTAPFNYAMDI) the chain is on the extracellular side. A helical membrane pass occupies residues 1225 to 1244 (LNMVFTGLFTIEMVLKIIAF). At 1245 to 1251 (KPKHYFT) the chain is on the cytoplasmic side. A helical membrane pass occupies residues 1252–1273 (DAWNTFDALIVVGSIVDIAVTE). Over 1274-1290 (VNNGGHLGESSEDSSRI) the chain is Extracellular. Residues 1291–1310 (SITFFRLFRVMRLVKLLSKG) form a helical membrane-spanning segment. Residues 1311–1329 (EGIRTLLWTFIKSFQALPY) lie on the Cytoplasmic side of the membrane. The helical transmembrane segment at 1330-1349 (VALLIAMIFFIYAVIGMQMF) threads the bilayer. The Extracellular portion of the chain corresponds to 1350 to 1416 (GKVALQDGTQ…GEEFTCGSNF (67 aa)). Residues 1397-1463 (RCDPESDFGP…LGPHHLDEFK (67 aa)) are dihydropyridine binding. Residues 1409–1452 (EFTCGSNFAIAYFISFFMLCAFLIINLFVAVIMDNFDYLTRDWS) are phenylalkylamine binding. Residues 1417-1441 (AIAYFISFFMLCAFLIINLFVAVIM) form a helical membrane-spanning segment. Topologically, residues 1442 to 1977 (DNFDYLTRDW…GDEMACVHAL (536 aa)) are cytoplasmic. 2 disordered regions span residues 1637 to 1754 (CDTE…EVPD) and 1816 to 1841 (DLPI…WATP). Acidic residues predominate over residues 1638 to 1657 (DTEEEEEEGQEGVEEEDEKD). Composition is skewed to polar residues over residues 1661–1670 (NKATMVSQPS), 1702–1716 (TPTS…AGSN), 1733–1743 (GNSQPKGTKGQ), and 1829–1840 (SGPNRAQGSWAT).

Belongs to the calcium channel alpha-1 subunit (TC 1.A.1.11) family. CACNA1F subfamily. Voltage-dependent calcium channels are multisubunit complexes, consisting of alpha-1, alpha-2, beta and delta subunits in a 1:1:1:1 ratio. The channel activity is directed by the pore-forming and voltage-sensitive alpha-1 subunit. In many cases, this subunit is sufficient to generate voltage-sensitive calcium channel activity. The auxiliary subunits beta and alpha-2/delta linked by a disulfide bridge regulate the channel activity. Interacts (via IQ domain) with CABP4; in a calcium independent manner. As to quaternary structure, interacts with CABP4; suppresses robust calcium-dependent inactivation of channel without enhancing the hyperpolarized voltage-dependent activation. Expression in skeletal muscle and retina. Isoform 4 is expressed in retina.

It localises to the membrane. It catalyses the reaction Ca(2+)(in) = Ca(2+)(out). Functionally, voltage-sensitive calcium channels (VSCC) mediate the entry of calcium ions into excitable cells and are also involved in a variety of calcium-dependent processes, including muscle contraction, hormone or neurotransmitter release, gene expression, cell motility, cell division and cell death. The isoform alpha-1F gives rise to L-type calcium currents. Long-lasting (L-type) calcium channels belong to the 'high-voltage activated' (HVA) group. They are blocked by dihydropyridines (DHP), phenylalkylamines, and by benzothiazepines. Activates at more negative voltages and does not undergo calcium-dependent inactivation (CDI), due to incoming calcium ions, during depolarization. In terms of biological role, voltage-dependent L-type calcium channel activates at more hyperpolarized voltages and exhibits a robust calcium-dependent inactivation (CDI), due to incoming calcium ions, during depolarizations. Its function is as follows. Voltage-sensitive calcium channels (VSCC) mediate the entry of calcium ions into excitable cells and are also involved in a variety of calcium-dependent processes, including muscle contraction, hormone or neurotransmitter release, gene expression, cell motility, cell division and cell death. The protein is Voltage-dependent L-type calcium channel subunit alpha-1F of Homo sapiens (Human).